The chain runs to 199 residues: ATP synthase subunit b (199 aa).

The chain crosses the membrane as a helical span at residues 5-25 (SFVTTLSVCVMILGLAALGFA).

The protein belongs to the ATPase B chain family. F-type ATPases have 2 components, F(1) - the catalytic core - and F(0) - the membrane proton channel. F(1) has five subunits: alpha(3), beta(3), gamma(1), delta(1), epsilon(1). F(0) has three main subunits: a(1), b(2) and c(10-14). The alpha and beta chains form an alternating ring which encloses part of the gamma chain. F(1) is attached to F(0) by a central stalk formed by the gamma and epsilon chains, while a peripheral stalk is formed by the delta and b chains.

The protein localises to the cell inner membrane. In terms of biological role, f(1)F(0) ATP synthase produces ATP from ADP in the presence of a proton or sodium gradient. F-type ATPases consist of two structural domains, F(1) containing the extramembraneous catalytic core and F(0) containing the membrane proton channel, linked together by a central stalk and a peripheral stalk. During catalysis, ATP synthesis in the catalytic domain of F(1) is coupled via a rotary mechanism of the central stalk subunits to proton translocation. Functionally, component of the F(0) channel, it forms part of the peripheral stalk, linking F(1) to F(0). In Citrifermentans bemidjiense (strain ATCC BAA-1014 / DSM 16622 / JCM 12645 / Bem) (Geobacter bemidjiensis), this protein is ATP synthase subunit b.